The following is a 762-amino-acid chain: Phosphoribosylformylglycinamidine synthase subunit PurL (762 aa).

His-58 is an active-site residue. ATP-binding residues include Tyr-61 and Lys-105. Glu-107 is a Mg(2+) binding site. Residues 108-111 (SHNH) and Arg-130 each bind substrate. The Proton acceptor role is filled by His-109. Asp-131 is a Mg(2+) binding site. Gln-260 provides a ligand contact to substrate. Asp-288 lines the Mg(2+) pocket. 332 to 334 (ESQ) provides a ligand contact to substrate. ATP-binding residues include Asn-520 and Gly-557. A Mg(2+)-binding site is contributed by Asn-558. Position 560 (Ser-560) interacts with substrate.

The protein belongs to the FGAMS family. Monomer. Part of the FGAM synthase complex composed of 1 PurL, 1 PurQ and 2 PurS subunits.

It is found in the cytoplasm. The enzyme catalyses N(2)-formyl-N(1)-(5-phospho-beta-D-ribosyl)glycinamide + L-glutamine + ATP + H2O = 2-formamido-N(1)-(5-O-phospho-beta-D-ribosyl)acetamidine + L-glutamate + ADP + phosphate + H(+). It participates in purine metabolism; IMP biosynthesis via de novo pathway; 5-amino-1-(5-phospho-D-ribosyl)imidazole from N(2)-formyl-N(1)-(5-phospho-D-ribosyl)glycinamide: step 1/2. Its function is as follows. Part of the phosphoribosylformylglycinamidine synthase complex involved in the purines biosynthetic pathway. Catalyzes the ATP-dependent conversion of formylglycinamide ribonucleotide (FGAR) and glutamine to yield formylglycinamidine ribonucleotide (FGAM) and glutamate. The FGAM synthase complex is composed of three subunits. PurQ produces an ammonia molecule by converting glutamine to glutamate. PurL transfers the ammonia molecule to FGAR to form FGAM in an ATP-dependent manner. PurS interacts with PurQ and PurL and is thought to assist in the transfer of the ammonia molecule from PurQ to PurL. The polypeptide is Phosphoribosylformylglycinamidine synthase subunit PurL (Rhodococcus erythropolis (strain PR4 / NBRC 100887)).